The sequence spans 130 residues: Chorion class B protein PC10 (130 aa).

The interval 1–22 (GAWNGRLGCGCGGIAPAAELAA) is left arm. The central domain stretch occupies residues 23 to 93 (SYGGGLGVAS…GNGALGITAE (71 aa)). Residues 94 to 130 (RGYGAGIGYEGLGLGYGAGIGYKGYGLGGCGCGCGRL) are right arm (Gly-rich tandem repeats).

The protein belongs to the chorion protein family.

In terms of biological role, this protein is one of many from the eggshell of the silk moth. The protein is Chorion class B protein PC10 of Antheraea polyphemus (Polyphemus moth).